Consider the following 222-residue polypeptide: GTP cyclohydrolase 1 (222 aa).

Residues C111, H114, and C182 each contribute to the Zn(2+) site.

Belongs to the GTP cyclohydrolase I family. In terms of assembly, toroid-shaped homodecamer, composed of two pentamers of five dimers.

The catalysed reaction is GTP + H2O = 7,8-dihydroneopterin 3'-triphosphate + formate + H(+). It functions in the pathway cofactor biosynthesis; 7,8-dihydroneopterin triphosphate biosynthesis; 7,8-dihydroneopterin triphosphate from GTP: step 1/1. The sequence is that of GTP cyclohydrolase 1 from Salmonella choleraesuis (strain SC-B67).